Here is a 397-residue protein sequence, read N- to C-terminus: Tryptophan synthase beta chain (397 aa).

Lysine 89 carries the post-translational modification N6-(pyridoxal phosphate)lysine.

This sequence belongs to the TrpB family. As to quaternary structure, tetramer of two alpha and two beta chains. Pyridoxal 5'-phosphate serves as cofactor.

The catalysed reaction is (1S,2R)-1-C-(indol-3-yl)glycerol 3-phosphate + L-serine = D-glyceraldehyde 3-phosphate + L-tryptophan + H2O. It participates in amino-acid biosynthesis; L-tryptophan biosynthesis; L-tryptophan from chorismate: step 5/5. Its function is as follows. The beta subunit is responsible for the synthesis of L-tryptophan from indole and L-serine. The polypeptide is Tryptophan synthase beta chain (Leptospira interrogans serogroup Icterohaemorrhagiae serovar copenhageni (strain Fiocruz L1-130)).